A 493-amino-acid chain; its full sequence is EGF-containing fibulin-like extracellular matrix protein 1 (493 aa).

The first 17 residues, 1 to 17 (MLQTLFLTMLTLALVKS), serve as a signal peptide directing secretion. The 46-residue stretch at 26–71 (YTQCTDGYEWDPIRQQCKDIDECDIVPDACKGGMKCVNHYGGYLCL) folds into the EGF-like 1; atypical domain. The EGF-like 2; calcium-binding domain maps to 173–213 (DIDECTSGTHNCRTDQVCINLRGSFTCQCLPGYQKRGEQCV). Disulfide bonds link C177/C190, C184/C199, C201/C212, C218/C228, C224/C237, C239/C252, C258/C268, C264/C277, C279/C292, C298/C309, C305/C318, C320/C332, C338/C350, C344/C359, and C365/C377. The EGF-like 3; calcium-binding domain maps to 214-253 (DIDECTVPPYCHQRCVNTPGSFYCQCSPGFQLAANNYTCV). Residue N249 is glycosylated (N-linked (GlcNAc...) asparagine). An EGF-like 4; calcium-binding domain is found at 254–293 (DINECDASNQCAQQCYNILGSFICQCNQGYELSSDRLNCE). The segment at 259–493 (DASNQCAQQC…LTIIVGPFSF (235 aa)) is mediates interaction with TIMP3. Residues 294-333 (DIDECRTSSYLCQYQCVNEPGKFSCMCPQGYEVVRSRTCQ) enclose the EGF-like 5; calcium-binding domain. An EGF-like 6; calcium-binding domain is found at 334–378 (DINECETTNECREDEMCWNYHGGFRCYPRNPCQDHYVLTSENRCV).

This sequence belongs to the fibulin family. In terms of assembly, interacts with ECM1. Interacts with TIMP3. As to expression, expressed in the eye in the ciliary body, cornea, inner nuclear layer of the retina, and in the optic disk.

It localises to the secreted. Its subcellular location is the extracellular space. The protein localises to the extracellular matrix. In terms of biological role, binds EGFR, the EGF receptor, inducing EGFR autophosphorylation and the activation of downstream signaling pathways. May play a role in cell adhesion and migration. May function as a negative regulator of chondrocyte differentiation. In the olfactory epithelium, it may regulate glial cell migration, differentiation and the ability of glial cells to support neuronal neurite outgrowth. In Mus musculus (Mouse), this protein is EGF-containing fibulin-like extracellular matrix protein 1 (Efemp1).